A 60-amino-acid chain; its full sequence is LKCHQLVPPFWKTCPEGKNLCYKMYMVSSSTVPVKRGCIDVCPKNSALVKYVCCNTDKCN.

4 disulfides stabilise this stretch: cysteine 3–cysteine 21, cysteine 14–cysteine 38, cysteine 42–cysteine 53, and cysteine 54–cysteine 59.

This sequence belongs to the three-finger toxin family. Short-chain subfamily. Type IA cytotoxin sub-subfamily. In terms of assembly, monomer in solution; Homodimer and oligomer in the presence of negatively charged lipids forming a pore with a size ranging between 20 and 30 Angstroms. In terms of tissue distribution, expressed by the venom gland.

It is found in the secreted. It localises to the target cell membrane. Functionally, shows cytolytic activity on many different cells by forming pore in lipid membranes. In vivo, increases heart rate or kills the animal by cardiac arrest. In addition, it binds to heparin with high affinity, interacts with Kv channel-interacting protein 1 (KCNIP1) in a calcium-independent manner, and binds to integrin alpha-V/beta-3 (ITGAV/ITGB3) with moderate affinity. The sequence is that of Cytotoxin 5 from Naja haje haje (Egyptian cobra).